The primary structure comprises 227 residues: 2,3-bisphosphoglycerate-dependent phosphoglycerate mutase (227 aa).

Substrate-binding positions include arginine 7–asparagine 14, threonine 20–glycine 21, arginine 59, glutamate 86–tyrosine 89, lysine 97, arginine 113–arginine 114, and glycine 182–asparagine 183. Histidine 8 (tele-phosphohistidine intermediate) is an active-site residue. Glutamate 86 functions as the Proton donor/acceptor in the catalytic mechanism.

This sequence belongs to the phosphoglycerate mutase family. BPG-dependent PGAM subfamily. Homodimer.

The catalysed reaction is (2R)-2-phosphoglycerate = (2R)-3-phosphoglycerate. It functions in the pathway carbohydrate degradation; glycolysis; pyruvate from D-glyceraldehyde 3-phosphate: step 3/5. In terms of biological role, catalyzes the interconversion of 2-phosphoglycerate and 3-phosphoglycerate. This chain is 2,3-bisphosphoglycerate-dependent phosphoglycerate mutase, found in Neisseria meningitidis serogroup B (strain ATCC BAA-335 / MC58).